A 346-amino-acid polypeptide reads, in one-letter code: uncharacterized protein (346 aa).

Residues W10–V109 are disordered. The span at K26 to P44 shows a compositional bias: low complexity. Over residues N56 to L67 the composition is skewed to polar residues. The span at K94 to V109 shows a compositional bias: low complexity.

This is an uncharacterized protein from Dictyostelium discoideum (Social amoeba).